We begin with the raw amino-acid sequence, 162 residues long: Cyanate hydratase (162 aa).

Active-site residues include arginine 90, glutamate 93, and serine 116.

This sequence belongs to the cyanase family.

It catalyses the reaction cyanate + hydrogencarbonate + 3 H(+) = NH4(+) + 2 CO2. Its function is as follows. Catalyzes the reaction of cyanate with bicarbonate to produce ammonia and carbon dioxide. The protein is Cyanate hydratase of Populus trichocarpa (Western balsam poplar).